Here is a 345-residue protein sequence, read N- to C-terminus: Phosphate acyltransferase (345 aa).

Belongs to the PlsX family. In terms of assembly, homodimer. Probably interacts with PlsY.

The protein resides in the cytoplasm. The enzyme catalyses a fatty acyl-[ACP] + phosphate = an acyl phosphate + holo-[ACP]. The protein operates within lipid metabolism; phospholipid metabolism. In terms of biological role, catalyzes the reversible formation of acyl-phosphate (acyl-PO(4)) from acyl-[acyl-carrier-protein] (acyl-ACP). This enzyme utilizes acyl-ACP as fatty acyl donor, but not acyl-CoA. In Nitratidesulfovibrio vulgaris (strain ATCC 29579 / DSM 644 / CCUG 34227 / NCIMB 8303 / VKM B-1760 / Hildenborough) (Desulfovibrio vulgaris), this protein is Phosphate acyltransferase.